The chain runs to 183 residues: uncharacterized protein (183 aa).

This sequence belongs to the Bcl-2 family.

This is an uncharacterized protein from Equine herpesvirus 2 (strain 86/87) (EHV-2).